The sequence spans 516 residues: Protein indeterminate-domain 4, chloroplastic (516 aa).

The span at 1–26 (MSSSSYNTSVIPSSSSSAQPFFITSS) shows a compositional bias: low complexity. A disordered region spans residues 1–68 (MSSSSYNTSV…QPGNPNPDAE (68 aa)). The N-terminal 70 residues, 1–70 (MSSSSYNTSV…GNPNPDAEVV (70 aa)), are a transit peptide targeting the chloroplast. The residue at position 73 (Ser-73) is a Phosphoserine. 2 consecutive C2H2-type zinc fingers follow at residues 83-105 (FICDVCNKGFQREQNLQLHRRGH) and 124-154 (YLCPEPTCVHHDPSRALGDLTGIKKHYYRKH). Residues 146–153 (IKKHYYRK) carry the Nuclear localization signal motif. The segment at 159–182 (WKCEKCSKRYAVQSDWKAHSKTCG) adopts a C2H2-type 2; degenerate zinc-finger fold. Residues Cys-161, Cys-164, His-177, Cys-181, Cys-188, Cys-190, His-203, and Cys-207 each contribute to the Zn(2+) site. Residues 186–209 (YRCDCGTIFSRRDSYITHRAFCDA) form a CCHC-type 2; atypical zinc finger. The segment at 196–208 (RRDSYITHRAFCD) is SHR-binding. Residues 483 to 516 (NRGGGGGGRGSARGGVSLDGEAKFPEQNYPFGRG) are disordered. The segment covering 484 to 495 (RGGGGGGRGSAR) has biased composition (gly residues).

As to quaternary structure, binds to RGA and SCL3 competitively in the nucleus.

Its subcellular location is the plastid. It is found in the chloroplast. The protein resides in the nucleus. Transcription factor that may act a transcriptional activator of nuclear-encoded photosynthetic gene expression. Binds DNA via its zinc fingers. Recognizes and binds to SCL3 promoter sequence 5'-AGACAA-3' to promote its expression when in complex with RGA. In Arabidopsis thaliana (Mouse-ear cress), this protein is Protein indeterminate-domain 4, chloroplastic.